Here is a 1431-residue protein sequence, read N- to C-terminus: Caskin-1 (1431 aa).

ANK repeat units follow at residues 48 to 77, 81 to 110, 114 to 143, 147 to 176, 188 to 217, and 220 to 249; these read DGFSALHHAALNGNTELISLLLEAQAAVDI, KGMRPLHYAAWQGRKEPMKLVLKAGSAVNV, EGHIPLHLAAQHGHYDVSEMLLQHQSNPCM, SGKTPLDLACEFGRVGVVQLLLSSNMCAAL, NGTSPLHLAAKNGHIDIIRLLLQAGIDINR, and KSGTALHEAALCGKTEVVRLLLDSGINAQV. Phosphotyrosine is present on Y253. Positions 281 to 347 constitute an SH3 domain; that stretch reads SAALQVRATK…PSSLGEAIVK (67 aa). The segment at 348–372 is disordered; it reads RAGSRTGSEPSPPQGGGSLGPSAPP. Position 358 is a phosphoserine (S358). Residues 375–471 are CASK-binding; the sequence is IWVLRKPFAG…PKKLESASAS (97 aa). R398 is modified (omega-N-methylarginine). Over residues 420–430 the composition is skewed to polar residues; it reads SQKSVSESSPG. Residues 420–471 are disordered; that stretch reads SQKSVSESSPGDSPVKPPEGSSGAARSQPPAAHAGQVYGEQPPKKLESASAS. Phosphoserine is present on residues S423 and S432. 2 SAM domains span residues 476-539 and 545-609; these read KSAE…LNIP and HKPA…LAEL. Phosphoserine is present on residues S637 and S650. A compositionally biased stretch (low complexity) spans 669 to 679; it reads LSGPAEAGAAA. Disordered regions lie at residues 669 to 1000 and 1016 to 1041; these read LSGP…TGSA and GGGGRAIRRPPEGHPTPRPASPEPGR. Residues 692-712 show a composition bias toward polar residues; sequence RTTSRESSLSGRARHISSSQE. A phosphoserine mark is found at S723 and S728. Phosphothreonine is present on T741. Residue S791 is modified to Phosphoserine. Positions 848-860 are enriched in pro residues; the sequence is PPAPGPAPPPVPA. A phosphoserine mark is found at S891, S893, and S989. Residues 1028–1037 show a composition bias toward pro residues; that stretch reads GHPTPRPASP. Residue T1067 is modified to Phosphothreonine. At S1069 the chain carries Phosphoserine. 2 disordered regions span residues 1072-1372 and 1389-1410; these read VTGL…RQKL and KIRQEDGQGPRPSSIEEKSTGS. Residues 1148 to 1160 are compositionally biased toward basic and acidic residues; it reads DTVKRRPKAKEPD. Residues 1191–1215 show a composition bias toward pro residues; it reads PELPPPPPPAEPPPADLMQLPPLPL. A compositionally biased stretch (polar residues) spans 1236 to 1247; that stretch reads QPVSKIQGSPTP. S1259 is subject to Phosphoserine. T1268 bears the Phosphothreonine mark. Over residues 1268–1283 the composition is skewed to pro residues; it reads TPPPVSPKPPPPPTAP. 3 stretches are compositionally biased toward low complexity: residues 1284 to 1299, 1309 to 1327, and 1345 to 1359; these read KPAKALAGLQSSSATP, PPAALIKPASSPPSQSASP, and PRAAASVVSGPPVAS. S1363 bears the Phosphoserine mark. Residues 1389-1407 are compositionally biased toward basic and acidic residues; sequence KIRQEDGQGPRPSSIEEKS.

In terms of assembly, binds the CaM kinase domain of CASK. Forms a ternary complex with CASK and LIN7A, LIN7B or LIN7C. Competes with APBA1 that forms a similar complex with CASK and LIN7 proteins. The tripartite complex CASKIN1/CASK/LIN7(A/B/C) binds the cytoplasmic tail of NRXN1. Polymerizes, via the tandem SAM domains, to form long, 8 nM wide fibers, upon which other proteins can assemble.

The protein localises to the cytoplasm. May link the scaffolding protein CASK to downstream intracellular effectors. In Mus musculus (Mouse), this protein is Caskin-1 (Caskin1).